We begin with the raw amino-acid sequence, 84 residues long: Delta-thalatoxin-Cad1a (84 aa).

The N-terminal stretch at 1–19 (MAYLKIVLVALMLVLAVSA) is a signal peptide. Residues 20-33 (MRRPDQQDQDISVA) constitute a propeptide that is removed on maturation. 3 disulfides stabilise this stretch: cysteine 38–cysteine 78, cysteine 40–cysteine 68, and cysteine 61–cysteine 79.

The protein belongs to the sea anemone sodium channel inhibitory toxin family. Type II subfamily.

It is found in the secreted. Its subcellular location is the nematocyst. Its function is as follows. Binds specifically to the voltage-gated sodium channel (Nav) and delays its inactivation. This chain is Delta-thalatoxin-Cad1a, found in Cryptodendrum adhaesivum (Adhesive sea anemone).